The chain runs to 494 residues: UDP-N-acetylmuramoyl-L-alanyl-D-glutamate--2,6-diaminopimelate ligase (494 aa).

Serine 32 contacts UDP-N-acetyl-alpha-D-muramoyl-L-alanyl-D-glutamate. 112-118 is an ATP binding site; that stretch reads GTNGKTT. UDP-N-acetyl-alpha-D-muramoyl-L-alanyl-D-glutamate-binding positions include asparagine 153, 154 to 155, serine 181, and arginine 189; that span reads TT. An N6-carboxylysine modification is found at lysine 221. Residues arginine 383, 407-410, glycine 459, and glutamate 463 each bind meso-2,6-diaminopimelate; that span reads DNPR. Positions 407-410 match the Meso-diaminopimelate recognition motif motif; sequence DNPR.

The protein belongs to the MurCDEF family. MurE subfamily. Mg(2+) serves as cofactor. Post-translationally, carboxylation is probably crucial for Mg(2+) binding and, consequently, for the gamma-phosphate positioning of ATP.

It is found in the cytoplasm. The catalysed reaction is UDP-N-acetyl-alpha-D-muramoyl-L-alanyl-D-glutamate + meso-2,6-diaminopimelate + ATP = UDP-N-acetyl-alpha-D-muramoyl-L-alanyl-gamma-D-glutamyl-meso-2,6-diaminopimelate + ADP + phosphate + H(+). Its pathway is cell wall biogenesis; peptidoglycan biosynthesis. In terms of biological role, catalyzes the addition of meso-diaminopimelic acid to the nucleotide precursor UDP-N-acetylmuramoyl-L-alanyl-D-glutamate (UMAG) in the biosynthesis of bacterial cell-wall peptidoglycan. The chain is UDP-N-acetylmuramoyl-L-alanyl-D-glutamate--2,6-diaminopimelate ligase from Solibacter usitatus (strain Ellin6076).